The primary structure comprises 92 residues: Large ribosomal subunit protein bL27 (92 aa).

The tract at residues Met1–Tyr20 is disordered.

Belongs to the bacterial ribosomal protein bL27 family.

This Legionella pneumophila (strain Paris) protein is Large ribosomal subunit protein bL27.